We begin with the raw amino-acid sequence, 421 residues long: UDP-N-acetylglucosamine 1-carboxyvinyltransferase (421 aa).

22–23 (KN) is a phosphoenolpyruvate binding site. R93 is a UDP-N-acetyl-alpha-D-glucosamine binding site. The Proton donor role is filled by C117. C117 carries the post-translational modification 2-(S-cysteinyl)pyruvic acid O-phosphothioketal. Residues 122-126 (RPVDL), D308, and V330 each bind UDP-N-acetyl-alpha-D-glucosamine.

This sequence belongs to the EPSP synthase family. MurA subfamily.

It is found in the cytoplasm. It catalyses the reaction phosphoenolpyruvate + UDP-N-acetyl-alpha-D-glucosamine = UDP-N-acetyl-3-O-(1-carboxyvinyl)-alpha-D-glucosamine + phosphate. It participates in cell wall biogenesis; peptidoglycan biosynthesis. Functionally, cell wall formation. Adds enolpyruvyl to UDP-N-acetylglucosamine. This is UDP-N-acetylglucosamine 1-carboxyvinyltransferase from Azotobacter vinelandii (strain DJ / ATCC BAA-1303).